Reading from the N-terminus, the 35-residue chain is Mu/omega-theraphotoxin-Tap1a (35 aa).

3 disulfides stabilise this stretch: cysteine 3-cysteine 18, cysteine 10-cysteine 23, and cysteine 17-cysteine 30.

This sequence belongs to the neurotoxin 10 (Hwtx-1) family. 59 (Tltx) subfamily. In terms of tissue distribution, expressed by the venom gland.

Its subcellular location is the secreted. Functionally, gating-modifier toxin that inhibits both sodium (Nav) and calcium (Cav3) channels by inducing hyperpolarizing shift in voltage-dependence of activation and steady state inactivation. Inhibits Nav1.1/SCN1A, Nav1.2/SCN2A, Nav1.3/SCN3A, Nav1.6/SCN6A, Nav1.7/SCN9A and Cav3.1/CACNA1G sodium and calcium channels at nanomolar concentrations (IC(50)=81-301 nM). Surprisingly, selectively slows fast inactivation of Nav1.3/SCN3A. Also shows moderate inhibition of Cav3.2/CACNA1H calcium channels (IC(50)=1233 nM). Ex vivo, nearly ablates neuronal mechanosensitivity in afferent fibers innervating the colon and the bladder. In vivo, in a mouse model of irritable bowel syndrome, intracolonic administration of the toxin reverses colonic mechanical hypersensitivity. In Theraphosa apophysis (Goliath pinkfoot tarantula), this protein is Mu/omega-theraphotoxin-Tap1a.